Reading from the N-terminus, the 376-residue chain is N6-methyladenosine RNA methyltransferase MTA1 (376 aa).

A disordered region spans residues 53–78 (TRRLISSPPPETPFVTPEPKNGPSPL).

Belongs to the MT-A70-like family.

It catalyses the reaction an adenosine in mRNA + S-adenosyl-L-methionine = an N(6)-methyladenosine in mRNA + S-adenosyl-L-homocysteine + H(+). N6-methyladenosine RNA methyltransferase that plays a crucial role in fungal phenotypic traits, virulence, and stress tolerance. Mediates the methylation of mRNAs to produce N6-methyladenosine (m6A)-containing mRNAs. M6A is a modification present at internal sites of mRNAs and some non-coding RNAs and plays a role in mRNA stability and processing. Required for appressorium turgor pressure and regulates autophagosome formation during appressorium formation stage. Specifically, mediates the stability of ATG8 mRNA in a m6A-dependent manner via modification of the m6A site A982 located in 3'UTR region. This Pyricularia oryzae (strain 70-15 / ATCC MYA-4617 / FGSC 8958) (Rice blast fungus) protein is N6-methyladenosine RNA methyltransferase MTA1.